We begin with the raw amino-acid sequence, 303 residues long: Acetaldehyde dehydrogenase 1 (303 aa).

The active-site Acyl-thioester intermediate is cysteine 130. NAD(+) is bound by residues 161–169 (SVGPGTRKN) and asparagine 272.

The protein belongs to the acetaldehyde dehydrogenase family.

The catalysed reaction is acetaldehyde + NAD(+) + CoA = acetyl-CoA + NADH + H(+). This is Acetaldehyde dehydrogenase 1 from Methylibium petroleiphilum (strain ATCC BAA-1232 / LMG 22953 / PM1).